A 339-amino-acid polypeptide reads, in one-letter code: Protein H339R (339 aa).

Belongs to the asfivirus H339R family. As to quaternary structure, interacts with NACA (alpha chain of nascent polypeptide-associated complex).

It localises to the host cytoplasm. The protein localises to the host nucleus. The protein resides in the virion. The sequence is that of Protein H339R from African swine fever virus (strain Badajoz 1971 Vero-adapted) (Ba71V).